The chain runs to 352 residues: tRNA pseudouridine synthase D (352 aa).

D81 serves as the catalytic Nucleophile. The TRUD domain maps to 157–303 (GVPNYFGLQR…MLHERRILRL (147 aa)).

It belongs to the pseudouridine synthase TruD family.

The enzyme catalyses uridine(13) in tRNA = pseudouridine(13) in tRNA. In terms of biological role, responsible for synthesis of pseudouridine from uracil-13 in transfer RNAs. In Azotobacter vinelandii (strain DJ / ATCC BAA-1303), this protein is tRNA pseudouridine synthase D.